Consider the following 650-residue polypeptide: Acetyl-coenzyme A synthetase (650 aa).

Residues 190-193, T308, and N332 each bind CoA; that span reads RGGR. ATP-binding positions include 384–386, 408–413, D497, and R512; these read GEP and DTWWQT. Residue S520 coordinates CoA. R523 lines the ATP pocket. Residues V534, H536, and V539 each contribute to the Mg(2+) site. R581 is a CoA binding site. The residue at position 606 (K606) is an N6-acetyllysine.

This sequence belongs to the ATP-dependent AMP-binding enzyme family. Mg(2+) is required as a cofactor. Post-translationally, acetylated. Deacetylation by the SIR2-homolog deacetylase activates the enzyme.

It carries out the reaction acetate + ATP + CoA = acetyl-CoA + AMP + diphosphate. In terms of biological role, catalyzes the conversion of acetate into acetyl-CoA (AcCoA), an essential intermediate at the junction of anabolic and catabolic pathways. AcsA undergoes a two-step reaction. In the first half reaction, AcsA combines acetate with ATP to form acetyl-adenylate (AcAMP) intermediate. In the second half reaction, it can then transfer the acetyl group from AcAMP to the sulfhydryl group of CoA, forming the product AcCoA. The sequence is that of Acetyl-coenzyme A synthetase from Bradyrhizobium sp. (strain ORS 278).